A 373-amino-acid polypeptide reads, in one-letter code: MIALHFGAGNIGRGFIGALLHHSGYDVVFADVNETMVSLLNEKKEYTVELADGGRQTEIIGPVSAINSAVQEQKLYRLINEAAIITTAVGPNVLRLIAPSIAEGLKRRTSSEPLNIIACENMIGGSSFLKKAVFGHLTEAERELVNRTVGFPDSAVDRIVPIQHHEDPLKVSVEPFFEWVIDRTGFAGGQPVLKGALFTDDLTPFIERKLFTVNTGHAVTAYVGYQRGLKTVKEAIGHPEIRRVVYDALSETGEYLVKAYGFKQSEHEQYMKKIIGRFENEYITDDVTRVARSPLRKLGANDRLVGPAKKIKEPNALAEGIAAALRFDYQDDPEAVELQKLIAEKGTSRVLQDICGIQLHEPLHGIVLKKLNQ.

Position 3–14 (3–14 (ALHFGAGNIGRG)) interacts with NAD(+).

It belongs to the mannitol dehydrogenase family.

It catalyses the reaction D-mannitol 1-phosphate + NAD(+) = beta-D-fructose 6-phosphate + NADH + H(+). The protein is Mannitol-1-phosphate 5-dehydrogenase of Bacillus velezensis (strain DSM 23117 / BGSC 10A6 / LMG 26770 / FZB42) (Bacillus amyloliquefaciens subsp. plantarum).